The primary structure comprises 585 residues: Packaging protein UL32 (585 aa).

The disordered stretch occupies residues 1–25 (MDRVESEEPMDGFESPVFSENTSSN). 8 residues coordinate Zn(2+): C107, C110, H187, C193, C408, C411, H484, and C491. Zinc finger regions lie at residues 107-193 (CLVC…LHVC) and 408-491 (CMLC…DLLC).

The protein belongs to the herpesviridae UL32 protein family.

The protein localises to the host cytoplasm. It localises to the host nucleus. Functionally, plays a role in efficient localization of neo-synthesized capsids to nuclear replication compartments, thereby controlling cleavage and packaging of virus genomic DNA. This is Packaging protein UL32 (26) from Varicella-zoster virus (strain Dumas) (HHV-3).